An 82-amino-acid chain; its full sequence is UPF0153 protein VC_1057 (82 aa).

The protein belongs to the UPF0153 family.

The protein is UPF0153 protein VC_1057 of Vibrio cholerae serotype O1 (strain ATCC 39315 / El Tor Inaba N16961).